Consider the following 719-residue polypeptide: Transcription factor E4F1 (719 aa).

The tract at residues 20–63 (NIITIQTTLGDEDEDIHKCGKCLAEFSALDAFIQHKLSRSCKRT) is required for ubiquitin ligase activity. Positions 59 to 125 (SCKRTQDPQT…SEDESSSPSK (67 aa)) are disordered. Residues 98–109 (EKQDAKVASGDK) show a composition bias toward basic and acidic residues. Positions 128–207 (WKLNTEGRYV…GLAFRESGAL (80 aa)) are mediates dimerization and DNA-binding. 2 C2H2-type zinc fingers span residues 136-158 (YVCD…MFTH) and 164-186 (FVCE…KRRH). The C2H2-type 3; degenerate zinc-finger motif lies at 192 to 216 (YRCNQCGLAFRESGALTRHLKSLTP). 5 consecutive C2H2-type zinc fingers follow at residues 365–387 (YKCP…VKGH), 393–415 (FKCL…METH), 421–443 (YKCG…MRAH), 449–471 (YHCS…HRTH), and 477–499 (YVCQ…IRHH). The C2H2-type 9; degenerate zinc-finger motif lies at 505–527 (FKCSKCGRGFAEHGTLNRHLRAK).

Its subcellular location is the nucleus. The protein localises to the nucleoplasm. The protein resides in the cytoplasm. The catalysed reaction is S-ubiquitinyl-[E2 ubiquitin-conjugating enzyme]-L-cysteine + [acceptor protein]-L-lysine = [E2 ubiquitin-conjugating enzyme]-L-cysteine + N(6)-ubiquitinyl-[acceptor protein]-L-lysine.. Its pathway is protein modification; protein ubiquitination. Its function is as follows. May function as a transcriptional repressor. May also function as a ubiquitin ligase. Functions in cell survival and proliferation through control of the cell cycle. This chain is Transcription factor E4F1 (e4f1), found in Danio rerio (Zebrafish).